The primary structure comprises 339 residues: mRNA cap guanine-N(7) methyltransferase 2 (339 aa).

Positions 1 to 277 constitute an mRNA cap 0 methyltransferase domain; the sequence is MAVTPHHRLY…LYSTFVFQKP (277 aa). Residues Lys14, Asp54, and 82-83 contribute to the S-adenosyl-L-methionine site; that span reads DP. A disordered region spans residues 314 to 339; that stretch reads VSRTDILPPADNEKGILGPGPADMRL.

It belongs to the class I-like SAM-binding methyltransferase superfamily. mRNA cap 0 methyltransferase family.

Its subcellular location is the nucleus. The catalysed reaction is a 5'-end (5'-triphosphoguanosine)-ribonucleoside in mRNA + S-adenosyl-L-methionine = a 5'-end (N(7)-methyl 5'-triphosphoguanosine)-ribonucleoside in mRNA + S-adenosyl-L-homocysteine. Functionally, mRNA-capping methyltransferase that methylates the N7 position of the added guanosine to the 5'-cap structure of mRNAs. Binds RNA containing 5'-terminal GpppC. This is mRNA cap guanine-N(7) methyltransferase 2 from Oryza sativa subsp. japonica (Rice).